We begin with the raw amino-acid sequence, 523 residues long: Alanine aminotransferase 2 (523 aa).

Positions 1-25 are disordered; it reads MQRAAALVRRGCGPRTPSSWGRSQS. Residues Ala187, Ser188, Tyr216, Asn271, and Ser338 each contribute to the pyridoxal 5'-phosphate site. Lys341 is subject to N6-(pyridoxal phosphate)lysine. Arg350 contributes to the pyridoxal 5'-phosphate binding site. An N6-acetyllysine mark is found at Lys415, Lys505, and Lys512.

This sequence belongs to the class-I pyridoxal-phosphate-dependent aminotransferase family. Alanine aminotransferase subfamily. Homodimer. Pyridoxal 5'-phosphate is required as a cofactor. Expressed at high levels in muscle, adipose tissue, kidney and brain and at lower levels in the liver and breast.

It carries out the reaction L-alanine + 2-oxoglutarate = pyruvate + L-glutamate. Its pathway is amino-acid degradation; L-alanine degradation via transaminase pathway; pyruvate from L-alanine: step 1/1. Catalyzes the reversible transamination between alanine and 2-oxoglutarate to form pyruvate and glutamate. This chain is Alanine aminotransferase 2 (GPT2), found in Homo sapiens (Human).